A 432-amino-acid chain; its full sequence is Probable cysteine protease ATG4 (432 aa).

Residues 74 to 97 (SRDTQAALSKPATPPHQLGIQRSK) are disordered. The active-site Nucleophile is C160. Active-site residues include D332 and H334.

This sequence belongs to the peptidase C54 family.

Its subcellular location is the cytoplasm. The protein resides in the nucleus. It localises to the preautophagosomal structure. It carries out the reaction [protein]-C-terminal L-amino acid-glycyl-phosphatidylethanolamide + H2O = [protein]-C-terminal L-amino acid-glycine + a 1,2-diacyl-sn-glycero-3-phosphoethanolamine. Cysteine protease that plays a key role in cytoplasm to vacuole transport (Cvt) and autophagy by mediating both proteolytic activation and delipidation of ATG8. Required for selective autophagic degradation of the nucleus (nucleophagy) as well as for mitophagy which contributes to regulate mitochondrial quantity and quality by eliminating the mitochondria to a basal level to fulfill cellular energy requirements and preventing excess ROS production. The protease activity is required for proteolytic activation of ATG8: cleaves the C-terminal amino acid of ATG8 to reveal a C-terminal glycine. ATG8 ubiquitin-like activity requires the exposure of the glycine at the C-terminus for its conjugation to phosphatidylethanolamine (PE) and its insertion to membranes, which is necessary for autophagy. The ATG8-PE conjugate mediates tethering between adjacent membranes and stimulates membrane hemifusion, leading to expansion of the autophagosomal membrane during autophagy. In addition to the protease activity, also catalyzes deconjugation of PE-conjugated forms of ATG8 during macroautophagy: ATG8 delipidation is required to release the protein from membranes, which facilitates multiple events during macroautophagy, and especially for efficient autophagosome biogenesis, the assembly of ATG9-containing tubulovesicular clusters into phagophores/autophagosomes, and for the disassembly of PAS-associated ATG components. ATG8 delipidation by ATG4 also recycles ATG8-PE generated on inappropriate membranes to maintain a reservoir of unlipidated ATG8 that is required for autophagosome formation at the PAS. This is Probable cysteine protease ATG4 (ATG4) from Coccidioides immitis (strain RS) (Valley fever fungus).